The sequence spans 329 residues: Chlorophyllase-1, chloroplastic (329 aa).

A chloroplast-targeting transit peptide spans 1 to 21 (MAAMVDSKPAASVQGTPLLAT). Residues 145-149 (GHSRG) carry the GXSXG motif. Ser147 (nucleophile) is an active-site residue. Active-site charge relay system residues include Asp169 and His242.

Belongs to the AB hydrolase superfamily. Lipase family.

The protein resides in the plastid. Its subcellular location is the chloroplast. It carries out the reaction a chlorophyll + H2O = a chlorophyllide + phytol + H(+). It functions in the pathway porphyrin-containing compound metabolism; chlorophyll degradation. Its function is as follows. Catalyzes the hydrolysis of ester bond in chlorophyll to yield chlorophyllide and phytol. In Citrus unshiu (Satsuma mandarin), this protein is Chlorophyllase-1, chloroplastic.